The sequence spans 103 residues: MADQKIRIRLKAFDHRLIDRSASEIVETAKRTGAQVRGPIPLPTKIERYTILVSPHADKDARDQYETRTHKRVLDIVDPNDKTVDALMKLELAAGVDVQIKLT.

The protein belongs to the universal ribosomal protein uS10 family. As to quaternary structure, part of the 30S ribosomal subunit.

Involved in the binding of tRNA to the ribosomes. This Xanthomonas campestris pv. campestris (strain B100) protein is Small ribosomal subunit protein uS10.